The chain runs to 718 residues: Phenylalanine--tRNA ligase beta subunit (718 aa).

The tRNA-binding domain maps to 39–153 (LNEISGIKFG…IFDLESNPLK (115 aa)). Positions 386-460 (SKKTFLDLNY…RFYGLEKLKD (75 aa)) constitute a B5 domain. Residues Asp438, Asp444, and Asp448 each contribute to the Mg(2+) site.

The protein belongs to the phenylalanyl-tRNA synthetase beta subunit family. Type 1 subfamily. As to quaternary structure, tetramer of two alpha and two beta subunits. Mg(2+) serves as cofactor.

Its subcellular location is the cytoplasm. It catalyses the reaction tRNA(Phe) + L-phenylalanine + ATP = L-phenylalanyl-tRNA(Phe) + AMP + diphosphate + H(+). The polypeptide is Phenylalanine--tRNA ligase beta subunit (Mesomycoplasma hyopneumoniae (strain J / ATCC 25934 / NCTC 10110) (Mycoplasma hyopneumoniae)).